We begin with the raw amino-acid sequence, 89 residues long: NADH-ubiquinone oxidoreductase chain 4L (89 aa).

3 helical membrane-spanning segments follow: residues 1–21, 22–42, and 57–77; these read MNLTLILFLIGILGFVLNRKN, IILMLISIEIMLLAITFLILV, and IYIIVVAGAESAIGLGILVAF.

It belongs to the complex I subunit 4L family.

It is found in the mitochondrion membrane. The catalysed reaction is a ubiquinone + NADH + 5 H(+)(in) = a ubiquinol + NAD(+) + 4 H(+)(out). Core subunit of the mitochondrial membrane respiratory chain NADH dehydrogenase (Complex I) that is believed to belong to the minimal assembly required for catalysis. Complex I functions in the transfer of electrons from NADH to the respiratory chain. The immediate electron acceptor for the enzyme is believed to be ubiquinone. The protein is NADH-ubiquinone oxidoreductase chain 4L (ND4L) of Cryphonectria parasitica (Chestnut blight fungus).